A 335-amino-acid polypeptide reads, in one-letter code: Holliday junction branch migration complex subunit RuvB (335 aa).

Positions 1–181 (MSERVISPEP…FGLLIRLNLY (181 aa)) are large ATPase domain (RuvB-L). ATP is bound by residues leucine 20, arginine 21, glycine 62, lysine 65, threonine 66, threonine 67, 128 to 130 (EDF), arginine 171, tyrosine 181, and arginine 218. Position 66 (threonine 66) interacts with Mg(2+). The tract at residues 182–252 (SPEDLEKIVT…IAGAGLALLQ (71 aa)) is small ATPAse domain (RuvB-S). The interval 255-335 (ELGLDDIDRR…KLNHSQKTLF (81 aa)) is head domain (RuvB-H). 2 residues coordinate DNA: arginine 310 and arginine 315.

Belongs to the RuvB family. Homohexamer. Forms an RuvA(8)-RuvB(12)-Holliday junction (HJ) complex. HJ DNA is sandwiched between 2 RuvA tetramers; dsDNA enters through RuvA and exits via RuvB. An RuvB hexamer assembles on each DNA strand where it exits the tetramer. Each RuvB hexamer is contacted by two RuvA subunits (via domain III) on 2 adjacent RuvB subunits; this complex drives branch migration. In the full resolvosome a probable DNA-RuvA(4)-RuvB(12)-RuvC(2) complex forms which resolves the HJ.

It is found in the cytoplasm. The catalysed reaction is ATP + H2O = ADP + phosphate + H(+). The RuvA-RuvB-RuvC complex processes Holliday junction (HJ) DNA during genetic recombination and DNA repair, while the RuvA-RuvB complex plays an important role in the rescue of blocked DNA replication forks via replication fork reversal (RFR). RuvA specifically binds to HJ cruciform DNA, conferring on it an open structure. The RuvB hexamer acts as an ATP-dependent pump, pulling dsDNA into and through the RuvAB complex. RuvB forms 2 homohexamers on either side of HJ DNA bound by 1 or 2 RuvA tetramers; 4 subunits per hexamer contact DNA at a time. Coordinated motions by a converter formed by DNA-disengaged RuvB subunits stimulates ATP hydrolysis and nucleotide exchange. Immobilization of the converter enables RuvB to convert the ATP-contained energy into a lever motion, pulling 2 nucleotides of DNA out of the RuvA tetramer per ATP hydrolyzed, thus driving DNA branch migration. The RuvB motors rotate together with the DNA substrate, which together with the progressing nucleotide cycle form the mechanistic basis for DNA recombination by continuous HJ branch migration. Branch migration allows RuvC to scan DNA until it finds its consensus sequence, where it cleaves and resolves cruciform DNA. The sequence is that of Holliday junction branch migration complex subunit RuvB from Methanoregula boonei (strain DSM 21154 / JCM 14090 / 6A8).